The chain runs to 275 residues: Ribosomal RNA small subunit methyltransferase A (275 aa).

S-adenosyl-L-methionine contacts are provided by N28, L30, G55, E77, D103, and N123.

This sequence belongs to the class I-like SAM-binding methyltransferase superfamily. rRNA adenine N(6)-methyltransferase family. RsmA subfamily.

The protein localises to the cytoplasm. The catalysed reaction is adenosine(1518)/adenosine(1519) in 16S rRNA + 4 S-adenosyl-L-methionine = N(6)-dimethyladenosine(1518)/N(6)-dimethyladenosine(1519) in 16S rRNA + 4 S-adenosyl-L-homocysteine + 4 H(+). In terms of biological role, specifically dimethylates two adjacent adenosines (A1518 and A1519) in the loop of a conserved hairpin near the 3'-end of 16S rRNA in the 30S particle. May play a critical role in biogenesis of 30S subunits. The sequence is that of Ribosomal RNA small subunit methyltransferase A from Rhizobium etli (strain ATCC 51251 / DSM 11541 / JCM 21823 / NBRC 15573 / CFN 42).